The following is a 149-amino-acid chain: Nucleoside diphosphate kinase (149 aa).

ATP is bound by residues Lys9, Phe57, Arg85, Thr91, Arg102, and Asn112. His115 serves as the catalytic Pros-phosphohistidine intermediate.

Belongs to the NDK family. The cofactor is Mg(2+).

The protein resides in the cytoplasm. It catalyses the reaction a 2'-deoxyribonucleoside 5'-diphosphate + ATP = a 2'-deoxyribonucleoside 5'-triphosphate + ADP. The enzyme catalyses a ribonucleoside 5'-diphosphate + ATP = a ribonucleoside 5'-triphosphate + ADP. Its function is as follows. Major role in the synthesis of nucleoside triphosphates other than ATP. The ATP gamma phosphate is transferred to the NDP beta phosphate via a ping-pong mechanism, using a phosphorylated active-site intermediate. The chain is Nucleoside diphosphate kinase from Methanosarcina mazei (strain ATCC BAA-159 / DSM 3647 / Goe1 / Go1 / JCM 11833 / OCM 88) (Methanosarcina frisia).